The following is a 790-amino-acid chain: PAN2-PAN3 deadenylation complex subunit PAN3 (790 aa).

Disordered regions lie at residues 166–191 (IAQQ…AVSA) and 235–259 (AMIS…ASPI). Positions 168–191 (QQQPQHPQKQQQHPPSVGGGAVSA) are enriched in low complexity. Positions 369–655 (DAAEAAQHAL…SVTDLMPMIG (287 aa)) are pseudokinase domain. Residues R423, 472–479 (DYHPGSQT), and 552–553 (TK) each bind ATP. The stretch at 656–694 (ARFYTQLDALQSKIDMQEDELAKEMENGRLYRILVKLNS) forms a coiled coil. Residues 695–790 (INERPDFNLD…FSELMSSAAN (96 aa)) are knob domain.

The protein belongs to the protein kinase superfamily. PAN3 family. Homodimer. Forms a heterotrimer with a catalytic subunit PAN2 to form the poly(A)-nuclease (PAN) deadenylation complex. Interacts (via PAM-2 motif) with poly(A)-binding protein (via PABC domain), conferring substrate specificity of the enzyme complex. Interacts with the GW182 family protein gw. Interacts with Gyf.

Its subcellular location is the cytoplasm. It is found in the P-body. In terms of biological role, regulatory subunit of the poly(A)-nuclease (PAN) deadenylation complex, one of two cytoplasmic mRNA deadenylases involved in general and miRNA-mediated mRNA turnover. PAN specifically shortens poly(A) tails of RNA and the activity is stimulated by poly(A)-binding protein (PABP). PAN deadenylation is followed by rapid degradation of the shortened mRNA tails by the CCR4-NOT complex. Deadenylated mRNAs are then degraded by two alternative mechanisms, namely exosome-mediated 3'-5' exonucleolytic degradation, or deadenylation-dependent mRNA decaping and subsequent 5'-3' exonucleolytic degradation by XRN1. PAN3 acts as a positive regulator for PAN activity, recruiting the catalytic subunit PAN2 to mRNA via its interaction with RNA and PABP, and to miRNA targets via its interaction with GW182 family proteins. This chain is PAN2-PAN3 deadenylation complex subunit PAN3, found in Drosophila melanogaster (Fruit fly).